The sequence spans 106 residues: Large ribosomal subunit protein eL42 (106 aa).

The interval 34–53 is disordered; the sequence is YAQGRRRYDRKRSGYGGQTK. Lys53 bears the N6-methyllysine mark.

It belongs to the eukaryotic ribosomal protein eL42 family.

It localises to the cytoplasm. This chain is Large ribosomal subunit protein eL42 (RPL36AL), found in Pongo abelii (Sumatran orangutan).